A 416-amino-acid polypeptide reads, in one-letter code: MSSWDVSMSNHAGLVFNPIRTVSDNAKPSPSPKPIIKLSVGDPTLDKNLLTSAAQIKKLKEAIDSQECNGYFPTVGSPEAREAVATWWRNSFVHKEELKSTIVKDNVVLCSGGSHGILMAITAICDAGDYALVPQPGFPHYETVCKAYGIGMHFYNCRPENDWEADLDEIRRLKDDKTKLLIVTNPSNPCGSNFSRKHVEDIVRLAEELRLPLFSDEIYAGMVFKGKDPNATFTSVADFETTVPRVILGGTAKNLVVPGWRLGWLLYVDPHGNGPSFLEGLKRVGMLVCGPCTVVQAALGEALLNTPQEHLDQIVAKIEESAMYLYNHIGECIGLAPTMPRGAMYLMSRIDLEKYRDIKTDVEFFEKLLEEENVQVLPGTIFHAPGFTRLTTTRPVEVYREAVERIKAFCQRHAAV.

K253 is subject to N6-(pyridoxal phosphate)lysine.

It belongs to the class-I pyridoxal-phosphate-dependent aminotransferase family. Homodimer. The cofactor is pyridoxal 5'-phosphate. Post-translationally, the N-terminus is blocked.

It is found in the cytoplasm. The protein resides in the mitochondrion. It carries out the reaction L-tyrosine + 2-oxoglutarate = 3-(4-hydroxyphenyl)pyruvate + L-glutamate. It functions in the pathway amino-acid degradation; L-phenylalanine degradation; acetoacetate and fumarate from L-phenylalanine: step 2/6. Its function is as follows. Transaminase involved in tyrosine breakdown. Converts tyrosine to p-hydroxyphenylpyruvate. The chain is Tyrosine aminotransferase from Trypanosoma cruzi.